A 540-amino-acid polypeptide reads, in one-letter code: Chaperonin GroEL (540 aa).

Residues Thr-29–Pro-32, Asp-86–Thr-90, Gly-413, Asn-476–Ala-478, and Asp-492 each bind ATP.

This sequence belongs to the chaperonin (HSP60) family. As to quaternary structure, forms a cylinder of 14 subunits composed of two heptameric rings stacked back-to-back. Interacts with the co-chaperonin GroES.

It is found in the cytoplasm. It catalyses the reaction ATP + H2O + a folded polypeptide = ADP + phosphate + an unfolded polypeptide.. Its function is as follows. Together with its co-chaperonin GroES, plays an essential role in assisting protein folding. The GroEL-GroES system forms a nano-cage that allows encapsulation of the non-native substrate proteins and provides a physical environment optimized to promote and accelerate protein folding. This Streptococcus agalactiae serotype V (strain ATCC BAA-611 / 2603 V/R) protein is Chaperonin GroEL.